An 860-amino-acid polypeptide reads, in one-letter code: GPI ethanolamine phosphate transferase 2 (860 aa).

N-linked (GlcNAc...) asparagine glycans are attached at residues Asn-123 and Asn-180. The next 8 membrane-spanning stretches (helical) occupy residues 408 to 428 (LGGI…FSAL), 438 to 458 (LYLI…TVEE), 459 to 479 (EHQI…ISGS), 487 to 506 (FNWM…NQTG), 524 to 544 (NHPV…NKVW), 555 to 575 (LAFL…ITQA), 576 to 596 (WEAG…PGTL), and 639 to 659 (AFLT…LFMV). Residue Asn-672 is glycosylated (N-linked (GlcNAc...) asparagine). 4 helical membrane passes run 692-712 (LVLV…FSMG), 736-756 (FVGV…STAG), 795-815 (VYVV…TCFF), and 834-854 (FVWT…IFVV).

It belongs to the PIGG/PIGN/PIGO family. PIGG subfamily.

The protein resides in the endoplasmic reticulum membrane. Its pathway is glycolipid biosynthesis; glycosylphosphatidylinositol-anchor biosynthesis. Ethanolamine phosphate transferase involved in glycosylphosphatidylinositol-anchor biosynthesis. Transfers ethanolamine phosphate to the GPI second mannose. In Yarrowia lipolytica (strain CLIB 122 / E 150) (Yeast), this protein is GPI ethanolamine phosphate transferase 2 (LAS21).